The chain runs to 429 residues: ATP-sensitive inward rectifier potassium channel 12 (429 aa).

The Cytoplasmic portion of the chain corresponds to 1–76 (MTAGRVNPYS…IADMFTTCVD (76 aa)). Residues 77–103 (IRWRYMLLLFSLAFLVSWLLFGLIFWL) traverse the membrane as a helical segment. A 1,2-diacyl-sn-glycero-3-phospho-(1D-myo-inositol-4,5-bisphosphate) contacts are provided by Arg-78 and Arg-80. Topologically, residues 104 to 129 (IALIHGDLENPGGDDTFKPCVLQVNG) are extracellular. An intrachain disulfide couples Cys-123 to Cys-155. The segment at residues 130–146 (FVAAFLFSIETQTTIGY) is an intramembrane region (helical; Pore-forming). 4 residues coordinate K(+): Thr-143, Ile-144, Gly-145, and Tyr-146. The Selectivity filter motif lies at 143–148 (TIGYGF). Topologically, residues 147–155 (GFRCVTEEC) are extracellular. A helical membrane pass occupies residues 156–183 (PLAVFMVVVQSIVGCIIDSFMIGAIMAK). Residues Lys-183 and Lys-188 each coordinate a 1,2-diacyl-sn-glycero-3-phospho-(1D-myo-inositol-4,5-bisphosphate). Topologically, residues 184–429 (MARPKKRAQT…QRSYRRESEI (246 aa)) are cytoplasmic. The tract at residues 386-407 (RDEDEEDDDSRGLDDLSPDNRH) is disordered. A compositionally biased stretch (basic and acidic residues) spans 395-407 (SRGLDDLSPDNRH).

It belongs to the inward rectifier-type potassium channel family. Homotetramer.

Its subcellular location is the membrane. It is found in the cell membrane. The protein resides in the sarcolemma. The protein localises to the T-tubule. The catalysed reaction is K(+)(in) = K(+)(out). Its activity is regulated as follows. Activated by phosphatidylinositol 4,5-bisphosphate (PtdIns(4,5)P2). PtdIns(4,5)P2 binding to the cytoplasmic side of the channel triggers a conformation change leading to channel opening. Inward rectifying potassium channel that probably participates in controlling the resting membrane potential in electrically excitable cells. Probably participates in establishing action potential waveform and excitability of neuronal and muscle tissues. Inward rectifier potassium channels are characterized by a greater tendency to allow potassium to flow into the cell rather than out of it. Their voltage dependence is regulated by the concentration of extracellular potassium; as external potassium is raised, the voltage range of the channel opening shifts to more positive voltages. The inward rectification is mainly due to the blockage of outward current by internal magnesium. The polypeptide is ATP-sensitive inward rectifier potassium channel 12 (KCNJ12) (Gallus gallus (Chicken)).